The chain runs to 318 residues: Mitochondrial coenzyme A transporter SLC25A42 (318 aa).

3 Solcar repeats span residues 31–117 (RQVL…YKRI), 129–214 (LPPW…LKSL), and 224–312 (PYPF…MQIL). The next 6 membrane-spanning stretches (helical) occupy residues 33-53 (VLSS…AVAP), 89-109 (LWRG…IQFS), 135-155 (LLAG…LDLV), 186-206 (LYFG…LSFF), 230-250 (MVFG…LDVV), and 293-313 (LKGP…QILL).

The protein belongs to the mitochondrial carrier (TC 2.A.29) family.

Its subcellular location is the mitochondrion inner membrane. It carries out the reaction ADP(out) + CoA(in) = ADP(in) + CoA(out). The enzyme catalyses 3'-dephospho-CoA(in) + ADP(out) = 3'-dephospho-CoA(out) + ADP(in). The catalysed reaction is adenosine 3',5'-bisphosphate(in) + ADP(out) = adenosine 3',5'-bisphosphate(out) + ADP(in). It catalyses the reaction AMP(in) + ADP(out) = AMP(out) + ADP(in). It carries out the reaction dADP(in) + ADP(out) = dADP(out) + ADP(in). The enzyme catalyses ADP(in) + ATP(out) = ADP(out) + ATP(in). Its function is as follows. Mitochondrial carrier mediating the transport of coenzyme A (CoA) in mitochondria in exchange for intramitochondrial (deoxy)adenine nucleotides and adenosine 3',5'-diphosphate. This is Mitochondrial coenzyme A transporter SLC25A42 (Slc25a42) from Mus musculus (Mouse).